Here is a 218-residue protein sequence, read N- to C-terminus: Small ribosomal subunit protein uS3c (218 aa).

Residues 39–109 (IRNYVKVNLS…QIRINVTELK (71 aa)) form the KH type-2 domain.

It belongs to the universal ribosomal protein uS3 family. As to quaternary structure, part of the 30S ribosomal subunit.

It is found in the plastid. The protein resides in the chloroplast. The protein is Small ribosomal subunit protein uS3c (rps3) of Rhodomonas salina (Cryptomonas salina).